We begin with the raw amino-acid sequence, 166 residues long: PTS system glucose-specific EIIA component (166 aa).

Residues 34–138 form the PTS EIIA type-1 domain; that stretch reads DPVFAQKMMG…SVISPIIITN (105 aa). His71 and His86 together coordinate Zn(2+). The Tele-phosphohistidine intermediate; for EIIA activity role is filled by His86. His86 carries the phosphohistidine; by HPr modification.

Heterodimer with glycerol kinase (glpk). Requires Zn(2+) as cofactor.

It is found in the cytoplasm. Its function is as follows. The phosphoenolpyruvate-dependent sugar phosphotransferase system (sugar PTS), a major carbohydrate active transport system, catalyzes the phosphorylation of incoming sugar substrates concomitantly with their translocation across the cell membrane. The enzyme II complex composed of PtsG and Crr is involved in glucose transport. This chain is PTS system glucose-specific EIIA component (crr), found in Staphylococcus aureus (strain Mu50 / ATCC 700699).